Here is a 128-residue protein sequence, read N- to C-terminus: Large ribosomal subunit protein bL17 (128 aa).

The protein belongs to the bacterial ribosomal protein bL17 family. In terms of assembly, part of the 50S ribosomal subunit. Contacts protein L32.

In Erwinia tasmaniensis (strain DSM 17950 / CFBP 7177 / CIP 109463 / NCPPB 4357 / Et1/99), this protein is Large ribosomal subunit protein bL17.